The primary structure comprises 54 residues: uncharacterized protein (54 aa).

The tract at residues 1 to 54 (MWTLKARKEHTGISGKPTARTDRHGSTRSGDSELQASARRFSRLPDRCGAQGVT) is disordered.

This is an uncharacterized protein from Mycobacterium tuberculosis (strain ATCC 25618 / H37Rv).